Reading from the N-terminus, the 154-residue chain is Interleukin-2 (154 aa).

A signal peptide spans 1–20; it reads MYKLQLLSCIALTLALVANS. A glycan (O-linked (GalNAc...) threonine) is linked at Thr-23. Cys-78 and Cys-126 form a disulfide bridge.

Belongs to the IL-2 family.

It is found in the secreted. Cytokine produced by activated CD4-positive helper T-cells and to a lesser extend activated CD8-positive T-cells and natural killer (NK) cells that plays pivotal roles in the immune response and tolerance. Binds to a receptor complex composed of either the high-affinity trimeric IL-2R (IL2RA/CD25, IL2RB/CD122 and IL2RG/CD132) or the low-affinity dimeric IL-2R (IL2RB and IL2RG). Interaction with the receptor leads to oligomerization and conformation changes in the IL-2R subunits resulting in downstream signaling starting with phosphorylation of JAK1 and JAK3. In turn, JAK1 and JAK3 phosphorylate the receptor to form a docking site leading to the phosphorylation of several substrates including STAT5. This process leads to activation of several pathways including STAT, phosphoinositide-3-kinase/PI3K and mitogen-activated protein kinase/MAPK pathways. Functions as a T-cell growth factor and can increase NK-cell cytolytic activity as well. Promotes strong proliferation of activated B-cells and subsequently immunoglobulin production. Plays a pivotal role in regulating the adaptive immune system by controlling the survival and proliferation of regulatory T-cells, which are required for the maintenance of immune tolerance. Moreover, participates in the differentiation and homeostasis of effector T-cell subsets, including Th1, Th2, Th17 as well as memory CD8-positive T-cells. The sequence is that of Interleukin-2 (IL2) from Lama glama (Llama).